The following is a 536-amino-acid chain: ATP synthase subunit alpha, mitochondrial (536 aa).

The transit peptide at 1–27 directs the protein to the mitochondrion; that stretch reads MLRQAGTRLLKVPVCGLRPSITLKRGY. 197-204 lines the ATP pocket; that stretch reads GDRQTGKT.

It belongs to the ATPase alpha/beta chains family. As to quaternary structure, F-type ATPases have 2 components, CF(1) - the catalytic core - and CF(0) - the membrane proton channel. CF(1) has five subunits: alpha(3), beta(3), gamma(1), delta(1), epsilon(1). CF(0) has three main subunits: a, b and c.

It localises to the mitochondrion. The protein resides in the mitochondrion inner membrane. In terms of biological role, mitochondrial membrane ATP synthase (F(1)F(0) ATP synthase or Complex V) produces ATP from ADP in the presence of a proton gradient across the membrane which is generated by electron transport complexes of the respiratory chain. F-type ATPases consist of two structural domains, F(1) - containing the extramembraneous catalytic core, and F(0) - containing the membrane proton channel, linked together by a central stalk and a peripheral stalk. During catalysis, ATP synthesis in the catalytic domain of F(1) is coupled via a rotary mechanism of the central stalk subunits to proton translocation. Subunits alpha and beta form the catalytic core in F(1). Rotation of the central stalk against the surrounding alpha(3)beta(3) subunits leads to hydrolysis of ATP in three separate catalytic sites on the beta subunits. Subunit alpha does not bear the catalytic high-affinity ATP-binding sites. The protein is ATP synthase subunit alpha, mitochondrial (atp1) of Schizosaccharomyces pombe (strain 972 / ATCC 24843) (Fission yeast).